We begin with the raw amino-acid sequence, 135 residues long: MEVKTFAFLQIAVFIALGIQIFAAVTAAADANEEVFTVEYCGMNCTQKSDGTWTECSGKNKDCRCYHESDAREGLCLSTEYTDFSQFETPSNSDLEAATPRPRKTLYPVRNPHGPKTRGLGYDKRILRDRVKFLI.

An N-terminal signal peptide occupies residues methionine 1–alanine 31. Intrachain disulfides connect cysteine 41/cysteine 63, cysteine 45/cysteine 65, and cysteine 56/cysteine 76. N-linked (GlcNAc...) asparagine glycosylation is present at asparagine 44. The interval glutamate 88–proline 112 is disordered.

The protein localises to the secreted. Functionally, salivary chemokine-binding protein which binds to host chemokine CXCL1. This is Evasin P1134 from Ixodes ricinus (Common tick).